A 220-amino-acid chain; its full sequence is Guanylate kinase (220 aa).

In terms of domain architecture, Guanylate kinase-like spans 16 to 195 (GLMFVLSSPS…AFESVRSILR (180 aa)). 23–30 (SPSGAGKT) is a binding site for ATP.

This sequence belongs to the guanylate kinase family.

The protein localises to the cytoplasm. The enzyme catalyses GMP + ATP = GDP + ADP. In terms of biological role, essential for recycling GMP and indirectly, cGMP. The polypeptide is Guanylate kinase (Rhodopseudomonas palustris (strain ATCC BAA-98 / CGA009)).